The sequence spans 295 residues: N-acetylmuramic acid 6-phosphate etherase (295 aa).

An SIS domain is found at 53 to 216; that stretch reads TTEQFKQGGR…STITMVGVGK (164 aa). Glu81 serves as the catalytic Proton donor. Glu112 is an active-site residue.

Belongs to the GCKR-like family. MurNAc-6-P etherase subfamily. Homodimer.

The enzyme catalyses N-acetyl-D-muramate 6-phosphate + H2O = N-acetyl-D-glucosamine 6-phosphate + (R)-lactate. The protein operates within amino-sugar metabolism; N-acetylmuramate degradation. Specifically catalyzes the cleavage of the D-lactyl ether substituent of MurNAc 6-phosphate, producing GlcNAc 6-phosphate and D-lactate. The protein is N-acetylmuramic acid 6-phosphate etherase of Staphylococcus saprophyticus subsp. saprophyticus (strain ATCC 15305 / DSM 20229 / NCIMB 8711 / NCTC 7292 / S-41).